The chain runs to 419 residues: Pyrophosphate--fructose 6-phosphate 1-phosphotransferase (419 aa).

Glycine 12 contributes to the diphosphate binding site. A Mg(2+)-binding site is contributed by aspartate 107. Substrate-binding positions include 132-134, 178-180, glutamate 238, and 300-303; these read TID, MGR, and YELR. The Proton acceptor role is filled by aspartate 134.

The protein belongs to the phosphofructokinase type A (PFKA) family. PPi-dependent PFK group II subfamily. Clade 'Short' sub-subfamily. In terms of assembly, homodimer. It depends on Mg(2+) as a cofactor. The cofactor is Co(2+). Mn(2+) is required as a cofactor. Ni(2+) serves as cofactor.

It is found in the cytoplasm. The enzyme catalyses beta-D-fructose 6-phosphate + diphosphate = beta-D-fructose 1,6-bisphosphate + phosphate + H(+). It functions in the pathway carbohydrate degradation; glycolysis; D-glyceraldehyde 3-phosphate and glycerone phosphate from D-glucose: step 3/4. Non-allosteric. Its function is as follows. Catalyzes the phosphorylation of D-fructose 6-phosphate, the first committing step of glycolysis. Uses inorganic phosphate (PPi) as phosphoryl donor instead of ATP like common ATP-dependent phosphofructokinases (ATP-PFKs), which renders the reaction reversible, and can thus function both in glycolysis and gluconeogenesis. Consistently, PPi-PFK can replace the enzymes of both the forward (ATP-PFK) and reverse (fructose-bisphosphatase (FBPase)) reactions. The sequence is that of Pyrophosphate--fructose 6-phosphate 1-phosphotransferase from Thermotoga maritima (strain ATCC 43589 / DSM 3109 / JCM 10099 / NBRC 100826 / MSB8).